Here is a 211-residue protein sequence, read N- to C-terminus: Large ribosomal subunit protein uL3 (211 aa).

Q150 is subject to N5-methylglutamine.

Belongs to the universal ribosomal protein uL3 family. In terms of assembly, part of the 50S ribosomal subunit. Forms a cluster with proteins L14 and L19. Post-translationally, methylated by PrmB.

One of the primary rRNA binding proteins, it binds directly near the 3'-end of the 23S rRNA, where it nucleates assembly of the 50S subunit. The chain is Large ribosomal subunit protein uL3 from Pseudomonas fluorescens (strain Pf0-1).